We begin with the raw amino-acid sequence, 365 residues long: MSQEDSSFVKLSVFGNIFQVTTRYTDLQPVGMGAFGLLCSSTDQKSGGPVAIKKVMKPFSAPVLAKRTYRELKLLKHLRHENIISLLDVFISPGEDIYFITELLGTDLHRLLSSRPLERQFVQYFLYQMLRALKFVHPAGVVHRDLKPSNILINENCDLKICDFGLARLQDPQMTGYVSTRYYRAPEIMLTWQEYDSAVDIWSVGCIFAEMIDGRPIFPGKDHVHQLTVITELLGSPPEDVINTITSENTRRFVDALPKRHKISFADRFPNANAEEIDLLEKMLDFNPKKRITAADALAHPYLAPYHDPEDEPTANERFDWSFNDADLPTDQWKVMMYSEILDFHNVDVKSEKDMTPSTTTAGAH.

One can recognise a Protein kinase domain in the interval 24–303 (YTDLQPVGMG…AADALAHPYL (280 aa)). ATP-binding positions include 30–38 (VGMGAFGLL) and lysine 53. Residue aspartate 145 is the Proton acceptor of the active site. Threonine 175 carries the phosphothreonine modification. Residues 175-177 (TGY) carry the TXY motif. Phosphotyrosine is present on tyrosine 177.

Belongs to the protein kinase superfamily. Ser/Thr protein kinase family. MAP kinase subfamily. HOG1 sub-subfamily. The cofactor is Mg(2+). In terms of processing, phosphorylated. Dually phosphorylated on Thr-175 and Tyr-177, which activates the enzyme. Rapidly dephosphorylated upon either hypo- or hyperosmotic shock.

The protein localises to the cytoplasm. It is found in the nucleus. It catalyses the reaction L-seryl-[protein] + ATP = O-phospho-L-seryl-[protein] + ADP + H(+). It carries out the reaction L-threonyl-[protein] + ATP = O-phospho-L-threonyl-[protein] + ADP + H(+). With respect to regulation, activated by tyrosine and threonine phosphorylation. Proline-directed serine/threonine-protein kinase involved in a signal transduction pathway that is activated by changes in the osmolarity of the extracellular environment. Controls osmotic regulation of transcription of target genes. The chain is Mitogen-activated protein kinase HOG1A (HOG1A) from Wallemia ichthyophaga (strain EXF-994 / CBS 113033).